A 452-amino-acid chain; its full sequence is Exodeoxyribonuclease 7 large subunit (452 aa).

It belongs to the XseA family. In terms of assembly, heterooligomer composed of large and small subunits.

Its subcellular location is the cytoplasm. The enzyme catalyses Exonucleolytic cleavage in either 5'- to 3'- or 3'- to 5'-direction to yield nucleoside 5'-phosphates.. Bidirectionally degrades single-stranded DNA into large acid-insoluble oligonucleotides, which are then degraded further into small acid-soluble oligonucleotides. The protein is Exodeoxyribonuclease 7 large subunit of Lysinibacillus sphaericus (strain C3-41).